The chain runs to 163 residues: Probable chemoreceptor glutamine deamidase CheD (163 aa).

It belongs to the CheD family.

It carries out the reaction L-glutaminyl-[protein] + H2O = L-glutamyl-[protein] + NH4(+). Its function is as follows. Probably deamidates glutamine residues to glutamate on methyl-accepting chemotaxis receptors (MCPs), playing an important role in chemotaxis. The chain is Probable chemoreceptor glutamine deamidase CheD from Borreliella afzelii (strain PKo) (Borrelia afzelii).